We begin with the raw amino-acid sequence, 347 residues long: Palmitoyltransferase ZDHHC11 (347 aa).

At 1–46 the chain is on the cytoplasmic side; that stretch reads MKEMNICGINKNWVLPEAQENNVKKFLPRPLSRVNGWSPPLHSFQA. The helical transmembrane segment at 47–67 threads the bilayer; it reads ISWITYLAMSIVTFGIFIPFL. Residues 68 to 75 are Lumenal-facing; it reads PYSWKYAA. Residues 76 to 96 traverse the membrane as a helical segment; it reads NIVMGGVFIFHLIVHLIAITI. The Cytoplasmic segment spans residues 97 to 170; sequence DPADTNVRLK…LNNCVGRRNY (74 aa). A DHHC domain is found at 128–178; it reads QYCHLCEVTASKKAKHCSACNKCVSGFDHHCKWLNNCVGRRNYWFFFWSVA. C158 functions as the S-palmitoyl cysteine intermediate in the catalytic mechanism. The chain crosses the membrane as a helical span at residues 171–191; sequence WFFFWSVASAAVGILGVMIIL. Residues 192-234 lie on the Lumenal side of the membrane; the sequence is CYICIQYFVNPDELRTDPLYKEIISENTWLLFLSLWPVPVKTP. The chain crosses the membrane as a helical span at residues 235 to 255; the sequence is IVLSIAVMALLLAIASFVMLG. Topologically, residues 256–347 are cytoplasmic; that stretch reads HLLIFHLYLI…SPPKICHSED (92 aa). The span at 291-306 shows a compositional bias: basic and acidic residues; sequence ELPLQKKGDLPQEKSD. Positions 291 to 332 are disordered; sequence ELPLQKKGDLPQEKSDNWAWPKSPPRVGSQKFPVSTLSPKSS. Positions 322–331 are enriched in polar residues; sequence FPVSTLSPKS.

This sequence belongs to the DHHC palmitoyltransferase family. In terms of assembly, interacts with IRF3 and STING1; in presence of DNA viruses recruits IRF3 to STING1 promoting IRF3 phosphorylation and activation.

The protein resides in the endosome membrane. It catalyses the reaction L-cysteinyl-[protein] + hexadecanoyl-CoA = S-hexadecanoyl-L-cysteinyl-[protein] + CoA. Endoplasmic reticulum-localized palmitoyltransferase that could catalyze the addition of palmitate onto various protein substrates and be involved in a variety of cellular processes. Has a palmitoyltransferase activity toward NCDN and regulates NCDN association with endosome membranes through this palmitoylation. May play a role in cell proliferation. Its function is as follows. Also has a palmitoyltransferase activity-independent function in DNA virus-triggered and CGAS-mediated innate immune response. Functions as an adapter that recruits IRF3 to STING1 to promote the activation of that key transcriptional regulator of type I interferon (IFN)-dependent immune response. This is Palmitoyltransferase ZDHHC11 from Mus musculus (Mouse).